An 86-amino-acid polypeptide reads, in one-letter code: MKFYIVFALILACAACVSSQEGTNFYCGRQLSRTLALVCWGAEKRDAGWWVPPQSARALGGGRGKRGPVDECCLKPCSIEEMLTYC.

The signal sequence occupies residues 1-19 (MKFYIVFALILACAACVSS). Residues 20–43 (QEGTNFYCGRQLSRTLALVCWGAE) constitute a propeptide that is removed on maturation. Position 63 is an arginine amide (Arg63). The propeptide occupies 67-86 (GPVDECCLKPCSIEEMLTYC).

This sequence belongs to the insulin family. DAGWWVPPQSARALGGGR-amide: Expressed in corpora cardiaca (CC), corpora allata (CA), antennal lobe (AL) and gnathal ganglion (GNG) (at protein level). Expression in CC and CA detected in most animals, in AL in some animals and in GNG in few animals (at protein level).

It localises to the secreted. The chain is Insulin-related peptide 2 from Agrotis ipsilon (Black cutworm moth).